Reading from the N-terminus, the 266-residue chain is Sesquipedalian-1 (266 aa).

The 97-residue stretch at 17 to 113 folds into the PH domain; that stretch reads PVDNAGFLYK…WVKALSRASF (97 aa). Residues 165-184 are disordered; that stretch reads QPSVAPQRPPPLPPRRRASA. S183 bears the Phosphoserine mark. The F&amp;H signature appears at 191-203; that stretch reads SFAQLHARYGLEV.

The protein belongs to the sesquipedalian family. In terms of assembly, forms homodimers and heterodimers with PHETA2. Interacts with OCRL and INPP5B. Interaction with OCRL may be important for endosomal morphology and function.

The protein localises to the early endosome. The protein resides in the recycling endosome. Its subcellular location is the golgi apparatus. It localises to the trans-Golgi network. It is found in the cytoplasmic vesicle. The protein localises to the clathrin-coated vesicle. Functionally, plays a role in endocytic trafficking. Required for receptor recycling from endosomes, both to the trans-Golgi network and the plasma membrane. The polypeptide is Sesquipedalian-1 (Mus musculus (Mouse)).